Reading from the N-terminus, the 176-residue chain is Xanthine-guanine phosphoribosyltransferase (176 aa).

Residues 51 to 52 (RG) and 110 to 118 (DDLVDTGKT) each bind 5-phospho-alpha-D-ribose 1-diphosphate. Asp-111 is a Mg(2+) binding site. Guanine-binding residues include Asp-114 and Ile-157. Xanthine contacts are provided by Asp-114 and Ile-157. Residues 114–118 (DTGKT) and 156–157 (WI) contribute to the GMP site.

Belongs to the purine/pyrimidine phosphoribosyltransferase family. XGPT subfamily. In terms of assembly, homotetramer. Mg(2+) is required as a cofactor.

It localises to the cell inner membrane. It catalyses the reaction GMP + diphosphate = guanine + 5-phospho-alpha-D-ribose 1-diphosphate. The catalysed reaction is XMP + diphosphate = xanthine + 5-phospho-alpha-D-ribose 1-diphosphate. It carries out the reaction IMP + diphosphate = hypoxanthine + 5-phospho-alpha-D-ribose 1-diphosphate. Its pathway is purine metabolism; GMP biosynthesis via salvage pathway; GMP from guanine: step 1/1. The protein operates within purine metabolism; XMP biosynthesis via salvage pathway; XMP from xanthine: step 1/1. Functionally, purine salvage pathway enzyme that catalyzes the transfer of the ribosyl-5-phosphate group from 5-phospho-alpha-D-ribose 1-diphosphate (PRPP) to the N9 position of the 6-oxopurines guanine and xanthine to form the corresponding ribonucleotides GMP (guanosine 5'-monophosphate) and XMP (xanthosine 5'-monophosphate), with the release of PPi. To a lesser extent, also acts on hypoxanthine. This Bradyrhizobium diazoefficiens (strain JCM 10833 / BCRC 13528 / IAM 13628 / NBRC 14792 / USDA 110) protein is Xanthine-guanine phosphoribosyltransferase.